Consider the following 380-residue polypeptide: DNA replication and repair protein RecF (380 aa).

Gly30 to Thr37 contacts ATP.

This sequence belongs to the RecF family.

Its subcellular location is the cytoplasm. Functionally, the RecF protein is involved in DNA metabolism; it is required for DNA replication and normal SOS inducibility. RecF binds preferentially to single-stranded, linear DNA. It also seems to bind ATP. This chain is DNA replication and repair protein RecF, found in Synechococcus sp. (strain JA-3-3Ab) (Cyanobacteria bacterium Yellowstone A-Prime).